Consider the following 356-residue polypeptide: DNA polymerase IV (356 aa).

The region spanning 7–188 (IIHIDMDCFY…LPLKKIPRVG (182 aa)) is the UmuC domain. Mg(2+) is bound by residues Asp-11 and Asp-106. Glu-107 is a catalytic residue.

Belongs to the DNA polymerase type-Y family. Monomer. The cofactor is Mg(2+).

Its subcellular location is the cytoplasm. The enzyme catalyses DNA(n) + a 2'-deoxyribonucleoside 5'-triphosphate = DNA(n+1) + diphosphate. In terms of biological role, poorly processive, error-prone DNA polymerase involved in untargeted mutagenesis. Copies undamaged DNA at stalled replication forks, which arise in vivo from mismatched or misaligned primer ends. These misaligned primers can be extended by PolIV. Exhibits no 3'-5' exonuclease (proofreading) activity. May be involved in translesional synthesis, in conjunction with the beta clamp from PolIII. This Actinobacillus pleuropneumoniae serotype 5b (strain L20) protein is DNA polymerase IV.